Reading from the N-terminus, the 307-residue chain is Oxygen-dependent coproporphyrinogen-III oxidase (307 aa).

S99 provides a ligand contact to substrate. Residues H103 and H113 each coordinate a divalent metal cation. The active-site Proton donor is the H113. 115 to 117 is a binding site for substrate; that stretch reads NVR. Residues H152 and H182 each coordinate a divalent metal cation. Residues 247-282 form an important for dimerization region; that stretch reads YVEFNLVFDRGTLFGLQSGGRTESILMSMPPVVNWR. 265–267 provides a ligand contact to substrate; the sequence is GGR.

It belongs to the aerobic coproporphyrinogen-III oxidase family. Homodimer. A divalent metal cation serves as cofactor.

It localises to the cytoplasm. The catalysed reaction is coproporphyrinogen III + O2 + 2 H(+) = protoporphyrinogen IX + 2 CO2 + 2 H2O. It functions in the pathway porphyrin-containing compound metabolism; protoporphyrin-IX biosynthesis; protoporphyrinogen-IX from coproporphyrinogen-III (O2 route): step 1/1. Its function is as follows. Involved in the heme biosynthesis. Catalyzes the aerobic oxidative decarboxylation of propionate groups of rings A and B of coproporphyrinogen-III to yield the vinyl groups in protoporphyrinogen-IX. This is Oxygen-dependent coproporphyrinogen-III oxidase from Paraburkholderia phytofirmans (strain DSM 17436 / LMG 22146 / PsJN) (Burkholderia phytofirmans).